Reading from the N-terminus, the 365-residue chain is S-adenosylmethionine decarboxylase proenzyme (365 aa).

Residues glutamate 31 and glutamate 34 contribute to the active site. The active-site Schiff-base intermediate with substrate; via pyruvic acid is the serine 87. At serine 87 the chain carries Pyruvic acid (Ser); by autocatalysis. Cysteine 101 functions as the Proton donor; for catalytic activity in the catalytic mechanism. Catalysis depends on proton acceptor; for processing activity residues serine 248 and histidine 263.

Belongs to the eukaryotic AdoMetDC family. As to quaternary structure, heterotetramer of two alpha and two beta chains. Pyruvate serves as cofactor. Post-translationally, is synthesized initially as an inactive proenzyme. Formation of the active enzyme involves a self-maturation process in which the active site pyruvoyl group is generated from an internal serine residue via an autocatalytic post-translational modification. Two non-identical subunits are generated from the proenzyme in this reaction, and the pyruvate is formed at the N-terminus of the alpha chain, which is derived from the carboxyl end of the proenzyme. The post-translation cleavage follows an unusual pathway, termed non-hydrolytic serinolysis, in which the side chain hydroxyl group of the serine supplies its oxygen atom to form the C-terminus of the beta chain, while the remainder of the serine residue undergoes an oxidative deamination to produce ammonia and the pyruvoyl group blocking the N-terminus of the alpha chain.

It carries out the reaction S-adenosyl-L-methionine + H(+) = S-adenosyl 3-(methylsulfanyl)propylamine + CO2. Its pathway is amine and polyamine biosynthesis; S-adenosylmethioninamine biosynthesis; S-adenosylmethioninamine from S-adenosyl-L-methionine: step 1/1. This chain is S-adenosylmethionine decarboxylase proenzyme (smd-1), found in Onchocerca volvulus.